The following is a 100-amino-acid chain: MASFLLSTLVFFLAALILVPQGLAQYHLNPVYEAPVNGPPVNKPPQKETPVQKPPQKEPPVHKSPRNEPPRHKPPHKKSHLHVTKRSYGKHATEEHSIHF.

The first 24 residues, 1-24 (MASFLLSTLVFFLAALILVPQGLA), serve as a signal peptide directing secretion. The tract at residues 32–100 (YEAPVNGPPV…HATEEHSIHF (69 aa)) is disordered. Tandem repeats lie at residues 39–43 (PPVNK) and 44–48 (PPQKE). Residues 39–78 (PPVNKPPQKETPVQKPPQKEPPVHKSPRNEPPRHKPPHKK) are 8 X 5 AA approximate tandem repeats of P-P-[VQHR]-[NKH]-[EK]. The 3; approximate repeat unit spans residues 49 to 53 (TPVQK). 2 tandem repeats follow at residues 54 to 58 (PPQKE) and 59 to 63 (PPVHK). A compositionally biased stretch (basic and acidic residues) spans 55–71 (PQKEPPVHKSPRNEPPR). The 6; approximate repeat unit spans residues 64-68 (SPRNE). 2 repeat units span residues 69–73 (PPRHK) and 74–78 (PPHKK). Residues 72–89 (HKPPHKKSHLHVTKRSYG) show a composition bias toward basic residues. Positions 91 to 100 (HATEEHSIHF) are enriched in basic and acidic residues.

It belongs to the plant proline-rich protein superfamily. ENOD12 family.

Its subcellular location is the secreted. The protein localises to the cell wall. Functionally, involved in the infection process during the plant-rhizobium interaction. May also have an additional function in the proliferation of the bacteria. The protein is Early nodulin-12 (ENOD12) of Vicia sativa (Spring vetch).